The following is a 71-amino-acid chain: uncharacterized protein (71 aa).

It is found in the plastid. The protein resides in the chloroplast. This is an uncharacterized protein from Mesostigma viride (Green alga).